A 323-amino-acid chain; its full sequence is Phosphoribosylaminoimidazole-succinocarboxamide synthase (323 aa).

Belongs to the SAICAR synthetase family.

It carries out the reaction 5-amino-1-(5-phospho-D-ribosyl)imidazole-4-carboxylate + L-aspartate + ATP = (2S)-2-[5-amino-1-(5-phospho-beta-D-ribosyl)imidazole-4-carboxamido]succinate + ADP + phosphate + 2 H(+). The protein operates within purine metabolism; IMP biosynthesis via de novo pathway; 5-amino-1-(5-phospho-D-ribosyl)imidazole-4-carboxamide from 5-amino-1-(5-phospho-D-ribosyl)imidazole-4-carboxylate: step 1/2. The polypeptide is Phosphoribosylaminoimidazole-succinocarboxamide synthase (Azobacteroides pseudotrichonymphae genomovar. CFP2).